The chain runs to 200 residues: Recombination protein RecR (200 aa).

The C4-type zinc finger occupies 59–74; the sequence is CEKCNTFTEAQVCEVC. Residues 82-177 form the Toprim domain; the sequence is ALLCVVETPA…AVTRLARGVP (96 aa).

The protein belongs to the RecR family.

May play a role in DNA repair. It seems to be involved in an RecBC-independent recombinational process of DNA repair. It may act with RecF and RecO. In Burkholderia pseudomallei (strain 1106a), this protein is Recombination protein RecR.